Consider the following 405-residue polypeptide: Palmitoyltransferase PFA5 (405 aa).

Helical transmembrane passes span 12 to 32 (YIKL…NYAI), 51 to 71 (IILW…WVLI), 154 to 174 (LFFM…LIYC), 191 to 211 (FIVL…LFGI), and 310 to 330 (FYTL…FIDI). The region spanning 111-161 (YYCSNSNSIKLERSFFSKDVGYNVIKFDHYCIWIGQPIGQDNYLFFMKFMM) is the DHHC domain.

It belongs to the DHHC palmitoyltransferase family. PFA5 subfamily. In terms of processing, autopalmitoylated.

The protein localises to the membrane. The enzyme catalyses L-cysteinyl-[protein] + hexadecanoyl-CoA = S-hexadecanoyl-L-cysteinyl-[protein] + CoA. The chain is Palmitoyltransferase PFA5 (PFA5) from Candida albicans (strain SC5314 / ATCC MYA-2876) (Yeast).